A 501-amino-acid polypeptide reads, in one-letter code: Acetylcholine receptor subunit beta (501 aa).

The N-terminal stretch at 1 to 23 is a signal peptide; it reads MALGALLLILGILGTPLAPGARG. The Extracellular segment spans residues 24-244; the sequence is SEAEGQLLKK…VIFYLIIRRK (221 aa). C151 and C165 form a disulfide bridge. A glycan (N-linked (GlcNAc...) asparagine) is linked at N164. Helical transmembrane passes span 245–269, 277–295, and 311–332; these read PLFY…VFYL, MGLS…LLLA, and YLMF…VLNL. The Cytoplasmic segment spans residues 333–469; that stretch reads HHRSPHTHQM…WQFVAMVVDR (137 aa). The interval 362–381 is disordered; the sequence is RPKPERDQLPEPHHSFSPRS. Residues 363–375 show a composition bias toward basic and acidic residues; the sequence is PKPERDQLPEPHH. Position 390 is a phosphotyrosine; by Tyr-kinases (Y390). The helical transmembrane segment at 470 to 488 threads the bilayer; the sequence is LFLWTFIVFTSVGTLVIFL.

It belongs to the ligand-gated ion channel (TC 1.A.9) family. Acetylcholine receptor (TC 1.A.9.1) subfamily. Beta-1/CHRNB1 sub-subfamily. As to quaternary structure, pentamer of two alpha chains, and one each of the beta, delta, and gamma (in immature muscle) or epsilon (in mature muscle) chains. The muscle heteropentamer composed of alpha-1, beta-1, delta, epsilon subunits interacts with the alpha-conotoxin ImII.

The protein resides in the postsynaptic cell membrane. The protein localises to the cell membrane. It carries out the reaction K(+)(in) = K(+)(out). The catalysed reaction is Na(+)(in) = Na(+)(out). Its function is as follows. After binding acetylcholine, the AChR responds by an extensive change in conformation that affects all subunits and leads to opening of an ion-conducting channel across the plasma membrane. In Rattus norvegicus (Rat), this protein is Acetylcholine receptor subunit beta (Chrnb1).